Reading from the N-terminus, the 224-residue chain is Cytidylate kinase (224 aa).

11 to 19 (GPAAAGKST) lines the ATP pocket.

The protein belongs to the cytidylate kinase family. Type 1 subfamily.

It localises to the cytoplasm. The enzyme catalyses CMP + ATP = CDP + ADP. The catalysed reaction is dCMP + ATP = dCDP + ADP. In Listeria welshimeri serovar 6b (strain ATCC 35897 / DSM 20650 / CCUG 15529 / CIP 8149 / NCTC 11857 / SLCC 5334 / V8), this protein is Cytidylate kinase.